An 811-amino-acid chain; its full sequence is Zinc finger CCCH domain-containing protein 11A (811 aa).

C3H1-type zinc fingers lie at residues 2–30 (PNQG…HCEA), 32–58 (LGNE…HMEI), and 61–87 (KRSE…HHNR). S109 is modified (phosphoserine). Glycyl lysine isopeptide (Lys-Gly) (interchain with G-Cter in SUMO2) cross-links involve residues K115 and K125. Phosphoserine is present on S133. 4 disordered regions span residues 140–195 (MKVE…GLRV), 224–258 (KKMK…KENV), 286–352 (GKRK…EKVN), and 368–434 (ERAS…TCIK). A Glycyl lysine isopeptide (Lys-Gly) (interchain with G-Cter in SUMO2) cross-link involves residue K141. Phosphoserine occurs at positions 150 and 172. Over residues 161-176 (ADDDEDDDDQFSEEGD) the composition is skewed to acidic residues. S291 is modified (phosphoserine). Basic and acidic residues-rich tracts occupy residues 310-323 (KKVE…DKTP) and 368-391 (ERAS…KTDD). Phosphothreonine is present on T322. Residues 363–424 (EEILLERASQ…KHRQQEAERQ (62 aa)) are a coiled coil. S371 is modified (phosphoserine). The segment covering 392-403 (STSGARSSSTIR) has biased composition (polar residues). Over residues 418–434 (QQEAERQKSKKDTTCIK) the composition is skewed to basic and acidic residues. K479 participates in a covalent cross-link: Glycyl lysine isopeptide (Lys-Gly) (interchain with G-Cter in SUMO2). The disordered stretch occupies residues 483–550 (ALRVQQSSES…KEASGETTGV (68 aa)). The span at 487–499 (QQSSESSTSSPSQ) shows a compositional bias: low complexity. K620 is covalently cross-linked (Glycyl lysine isopeptide (Lys-Gly) (interchain with G-Cter in SUMO2)). The segment at 716–769 (TVPEAENPRDSLVLPPTQSSSDSSPPEVSGPSSSQMSMKTRRLSSASTGKPQLS) is disordered. Residues 730 to 749 (PPTQSSSDSSPPEVSGPSSS) are compositionally biased toward low complexity. Over residues 750–766 (QMSMKTRRLSSASTGKP) the composition is skewed to polar residues.

In terms of assembly, interacts with TREX complex components THOC2, DDX39 and POLDIP3; the interactions are ATP-dependent. Interacts with PABPN1; this interaction retains ZC3H11A in nuclear speckles. Interacts with KPNA3.

The protein resides in the nucleus speckle. In terms of biological role, through its association with TREX complex components, may participate in the export and post-transcriptional coordination of selected mRNA transcripts, including those required to maintain the metabolic processes in embryonic cells. Binds RNA. This Pongo abelii (Sumatran orangutan) protein is Zinc finger CCCH domain-containing protein 11A (ZC3H11A).